The sequence spans 602 residues: Aspartate--tRNA(Asp/Asn) ligase (602 aa).

An L-aspartate-binding site is contributed by E177. Residues 201-204 (QLFK) are aspartate. Residue R223 participates in L-aspartate binding. ATP contacts are provided by residues 223-225 (RDE) and Q232. Residue H460 coordinates L-aspartate. E497 contributes to the ATP binding site. R504 contributes to the L-aspartate binding site. 549-552 (GLDR) provides a ligand contact to ATP.

It belongs to the class-II aminoacyl-tRNA synthetase family. Type 1 subfamily. As to quaternary structure, homodimer.

The protein localises to the cytoplasm. The catalysed reaction is tRNA(Asx) + L-aspartate + ATP = L-aspartyl-tRNA(Asx) + AMP + diphosphate. Functionally, aspartyl-tRNA synthetase with relaxed tRNA specificity since it is able to aspartylate not only its cognate tRNA(Asp) but also tRNA(Asn). Reaction proceeds in two steps: L-aspartate is first activated by ATP to form Asp-AMP and then transferred to the acceptor end of tRNA(Asp/Asn). In Prochlorococcus marinus (strain MIT 9515), this protein is Aspartate--tRNA(Asp/Asn) ligase.